The chain runs to 821 residues: High affinity potassium transporter (821 aa).

Positions 1-10 (MSDSQSNKQN) are enriched in polar residues. Residues 1 to 47 (MSDSQSNKQNQGEDDNNVSSSIESNENYPFRLNDEESEPQSSTTESM) are disordered. The Cytoplasmic segment spans residues 1–57 (MSDSQSNKQNQGEDDNNVSSSIESNENYPFRLNDEESEPQSSTTESMLKAKKQSWRQ). Residues 17–27 (NVSSSIESNEN) show a composition bias toward low complexity. Residues 58–78 (VLMLGFSSLGAIYGDIGTSPL) traverse the membrane as a helical segment. The Extracellular portion of the chain corresponds to 79–101 (YVLNSIKYPNSSPTEEDIYGAIS). Residues 102-122 (IIFYLFTFIVIFKYILIVLFL) form a helical membrane-spanning segment. Topologically, residues 123-190 (GTNDGEGGQV…KASGFKTNPK (68 aa)) are cytoplasmic. Residues 191–211 (LIKFISKFILFGCFFGCSLVM) form a helical membrane-spanning segment. Topologically, residues 212–238 (SDGLLTPTTSVLSAIAGIQIANPSFND) are extracellular. Residues 239 to 259 (VLAVSEVVLIVLFLIQQFGSN) traverse the membrane as a helical segment. A topological domain (cytoplasmic) is located at residue K260. Residues 261–281 (ISFTFAPIIFLWLIGLIISGI) form a helical membrane-spanning segment. At 282-306 (YNIVKFHPAVFKSLSPYYAIQLLKH) the chain is on the extracellular side. Residues 307-327 (SGIDVFSGAMLSITGTEAMFA) form a helical membrane-spanning segment. Residues 328–340 (DVGHFGRLPIQLT) lie on the Cytoplasmic side of the membrane. A helical membrane pass occupies residues 341–361 (LTLFVYPALIICYLGQGAYII). The Extracellular portion of the chain corresponds to 362 to 386 (KHPEALSNPFFYSIPGGLNSWIYWV). A helical membrane pass occupies residues 387–407 (MFVLATLSTIIASQALILGVF). At 408-434 (SITSQLINLDCFPNFKIIHVSKKYAGK) the chain is on the cytoplasmic side. Residues 435–455 (VYIPAINWLLMIGVCATTAGF) form a helical membrane-spanning segment. Topologically, residues 456 to 463 (KNSNNVTA) are extracellular. The N-linked (GlcNAc...) asparagine glycan is linked to N460. A helical membrane pass occupies residues 464-484 (AYGLGITLDFLVTSSLIMVCM). Residues 485–491 (TYVYNWN) lie on the Cytoplasmic side of the membrane. Residues 492-512 (ILIPITYALIFLPLEVIMVIS) form a helical membrane-spanning segment. Residues 513 to 516 (NLKK) are Extracellular-facing. A helical membrane pass occupies residues 517 to 537 (ITHGAWFPLMMSGIFMMFLSF). Residues 538–821 (WRWARSRKVN…KMFLGGVVRI (284 aa)) are Cytoplasmic-facing.

This sequence belongs to the HAK/KUP transporter (TC 2.A.72) family.

It is found in the membrane. Major high-affinity potassium uptake protein. This is High affinity potassium transporter (HAK1) from Schwanniomyces occidentalis (Yeast).